Here is a 547-residue protein sequence, read N- to C-terminus: Sodium-coupled neutral amino acid transporter 4 (547 aa).

The segment at 1 to 34 (MDPMELNNVSIEPDGDSCSGDSIQDSYTGMENSD) is disordered. The Extracellular portion of the chain corresponds to 1–104 (MDPMELNNVS…GLSYAMANTG (104 aa)). Polar residues predominate over residues 19–31 (SGDSIQDSYTGME). The residue at position 49 (Ser49) is a Phosphoserine. The chain crosses the membrane as a helical span at residues 105–125 (IILFIIMLLTVAILSLYSVHL). Residues 126 to 151 (LLKTAKEGGSLIYEKLGEKAFGWPGK) are Cytoplasmic-facing. The helical transmembrane segment at 152-172 (IGAFISITMQNIGAMSSYLFI) threads the bilayer. The Extracellular segment spans residues 173-195 (IKYELPEVIRAFMGLEENTGEWY). Residues 196–216 (LNGNYLVLFVSVGIILPLSLL) traverse the membrane as a helical segment. The Cytoplasmic segment spans residues 217–220 (KNLG). The chain crosses the membrane as a helical span at residues 221 to 241 (YLGYTSGFSLSCMVFFVSVVI). The Extracellular portion of the chain corresponds to 242 to 332 (YKKFQIPCPL…PKYFVFNSRT (91 aa)). A disulfide bridge links Cys249 with Cys321. Asn260, Asn264, and Asn276 each carry an N-linked (GlcNAc...) asparagine glycan. The chain crosses the membrane as a helical span at residues 333 to 353 (AYAIPILAFAFVCHPEVLPIY). Topologically, residues 354–369 (SELKDRSRRKMQTVSN) are cytoplasmic. The chain crosses the membrane as a helical span at residues 370 to 390 (ISISGMLVMYLLAALFGYLSF). Residues 391 to 411 (YGDVEDELLHAYSKVYTFDTA) lie on the Extracellular side of the membrane. The helical transmembrane segment at 412–432 (LLMVRLAVLVAVTLTVPIVLF) threads the bilayer. Over 433 to 453 (PIRTSVITLLFPRKPFSWLKH) the chain is Cytoplasmic. The chain crosses the membrane as a helical span at residues 454–474 (FGIAAIIIALNNILVILVPTI). Residues 475–476 (KY) lie on the Extracellular side of the membrane. The chain crosses the membrane as a helical span at residues 477–497 (IFGFIGASSATMLIFILPAAF). The Cytoplasmic segment spans residues 498–514 (YLKLVKKEPLRSPQKIG). Residues 515 to 535 (ALVFLVTGIIFMMGSMALIIL) form a helical membrane-spanning segment. Topologically, residues 536–547 (DWIYNPPNPNHH) are extracellular.

It belongs to the amino acid/polyamine transporter 2 family. The disulfide bond plays an important role in substrate transport, but has no effect on trafficking to the cell surface. As to expression, detected in liver, in hepatocytes surrounding the central vein. Not detected in heart, kidney, brain, lung, small intestine, spleen and thymus. Highly expressed in placenta.

It localises to the cell membrane. The protein resides in the cell projection. Its subcellular location is the microvillus membrane. The catalysed reaction is L-alanine(in) + Na(+)(in) = L-alanine(out) + Na(+)(out). It catalyses the reaction L-methionine(in) + Na(+)(in) = L-methionine(out) + Na(+)(out). The enzyme catalyses L-asparagine(in) + Na(+)(in) = L-asparagine(out) + Na(+)(out). It carries out the reaction L-threonine(in) + Na(+)(in) = L-threonine(out) + Na(+)(out). The catalysed reaction is L-serine(in) + Na(+)(in) = L-serine(out) + Na(+)(out). It catalyses the reaction glycine(in) + Na(+)(in) = glycine(out) + Na(+)(out). The enzyme catalyses L-glutamine(in) + Na(+)(in) = L-glutamine(out) + Na(+)(out). It carries out the reaction L-histidine(in) + Na(+)(in) = L-histidine(out) + Na(+)(out). The catalysed reaction is L-cysteine(in) + Na(+)(in) = L-cysteine(out) + Na(+)(out). It catalyses the reaction L-proline(in) + Na(+)(in) = L-proline(out) + Na(+)(out). In terms of biological role, symporter that cotransports neutral amino acids and sodium ions from the extraccellular to the intracellular side of the cell membrane. The transport is electrogenic, pH dependent and partially tolerates substitution of Na(+) by Li(+). Preferentially transports smaller amino acids, such as glycine, L-alanine, L-serine, L-asparagine and L-threonine, followed by L-cysteine, L-histidine, L-proline and L-glutamine and L-methionine. In Mus musculus (Mouse), this protein is Sodium-coupled neutral amino acid transporter 4.